Consider the following 401-residue polypeptide: Riboflavin biosynthesis protein RibBA (401 aa).

The DHBP synthase stretch occupies residues 1–203 (MTDFQFSKVE…IQQLQEYRRK (203 aa)). D-ribulose 5-phosphate is bound by residues 30 to 31 (RE), Asp35, 142 to 146 (RNGHT), and Glu166. A Mg(2+)-binding site is contributed by Glu31. His145 serves as a coordination point for Mg(2+). The segment at 204-401 (HDSLVKQISV…QIKMGHMFNF (198 aa)) is GTP cyclohydrolase II. 254 to 258 (RIHSE) is a GTP binding site. Zn(2+) contacts are provided by Cys259, Cys270, and Cys272. Residues Gln275, 297-299 (EGR), and Thr319 each bind GTP. Asp331 (proton acceptor; for GTP cyclohydrolase activity) is an active-site residue. Arg333 (nucleophile; for GTP cyclohydrolase activity) is an active-site residue. Thr354 and Lys359 together coordinate GTP.

In the N-terminal section; belongs to the DHBP synthase family. The protein in the C-terminal section; belongs to the GTP cyclohydrolase II family. The cofactor is Mg(2+). It depends on Mn(2+) as a cofactor. Zn(2+) serves as cofactor.

The catalysed reaction is D-ribulose 5-phosphate = (2S)-2-hydroxy-3-oxobutyl phosphate + formate + H(+). It carries out the reaction GTP + 4 H2O = 2,5-diamino-6-hydroxy-4-(5-phosphoribosylamino)-pyrimidine + formate + 2 phosphate + 3 H(+). It participates in cofactor biosynthesis; riboflavin biosynthesis; 2-hydroxy-3-oxobutyl phosphate from D-ribulose 5-phosphate: step 1/1. The protein operates within cofactor biosynthesis; riboflavin biosynthesis; 5-amino-6-(D-ribitylamino)uracil from GTP: step 1/4. Catalyzes the conversion of D-ribulose 5-phosphate to formate and 3,4-dihydroxy-2-butanone 4-phosphate. Its function is as follows. Catalyzes the conversion of GTP to 2,5-diamino-6-ribosylamino-4(3H)-pyrimidinone 5'-phosphate (DARP), formate and pyrophosphate. In Actinobacillus pleuropneumoniae serotype 7 (strain AP76), this protein is Riboflavin biosynthesis protein RibBA.